A 134-amino-acid chain; its full sequence is MKNMGDGRRIARVEREIQATIAQFLIRGFKTPLPGLVTVASVKMPADLRAAKVYVSILGDEKQQDEALDLLQERAFEIQNYIGKELKMRYCPKLTFYLDHATEQVLKVEKILHELELERKANNPGEGSDESDDE.

Belongs to the RbfA family. Monomer. Binds 30S ribosomal subunits, but not 50S ribosomal subunits or 70S ribosomes.

Its subcellular location is the cytoplasm. One of several proteins that assist in the late maturation steps of the functional core of the 30S ribosomal subunit. Associates with free 30S ribosomal subunits (but not with 30S subunits that are part of 70S ribosomes or polysomes). Required for efficient processing of 16S rRNA. May interact with the 5'-terminal helix region of 16S rRNA. This Bdellovibrio bacteriovorus (strain ATCC 15356 / DSM 50701 / NCIMB 9529 / HD100) protein is Ribosome-binding factor A.